A 175-amino-acid polypeptide reads, in one-letter code: Ribosome maturation factor RimM (175 aa).

One can recognise a PRC barrel domain in the interval 98–175 (EGEYYWYQLE…EMRVDWDADF (78 aa)).

It belongs to the RimM family. Binds ribosomal protein uS19.

It localises to the cytoplasm. An accessory protein needed during the final step in the assembly of 30S ribosomal subunit, possibly for assembly of the head region. Essential for efficient processing of 16S rRNA. May be needed both before and after RbfA during the maturation of 16S rRNA. It has affinity for free ribosomal 30S subunits but not for 70S ribosomes. This is Ribosome maturation factor RimM from Pseudomonas paraeruginosa (strain DSM 24068 / PA7) (Pseudomonas aeruginosa (strain PA7)).